A 473-amino-acid chain; its full sequence is Myocyte-specific enhancer factor 2C (473 aa).

One can recognise an MADS-box domain in the interval Arg-3–Tyr-57. Lys-4 is subject to N6-acetyllysine. The mef2-type DNA-binding region spans Ala-58–Glu-86. A Phosphoserine; by CK2 modification is found at Ser-59. Positions Lys-91–Lys-116 are disordered. 3 positions are modified to phosphoserine: Ser-98, Ser-106, and Ser-110. N6-acetyllysine occurs at positions 116 and 119. The interval Asn-180–Gly-224 is disordered. Phosphoserine occurs at positions 222 and 228. An N6-acetyllysine mark is found at Lys-234 and Lys-239. Ser-240 carries the post-translational modification Phosphoserine. N6-acetyllysine is present on residues Lys-252 and Lys-264. A beta domain region spans residues Ser-271–Leu-278. Phosphothreonine; by MAPK14 is present on residues Thr-293 and Thr-300. Residues Ala-368–Arg-399 are transcription repressor. Residues Ser-375–Ile-390 are compositionally biased toward polar residues. Positions Ser-375 to Thr-473 are disordered. Residue Lys-391 forms a Glycyl lysine isopeptide (Lys-Gly) (interchain with G-Cter in SUMO) linkage. Ser-396 carries the post-translational modification Phosphoserine; by CDK5. The residue at position 419 (Ser-419) is a Phosphoserine; by MAPK7. The span at Ser-419–Asp-432 shows a compositional bias: low complexity. Residues Gly-433–Phe-443 show a composition bias toward basic and acidic residues. Residue Ser-445 is modified to Phosphoserine.

This sequence belongs to the MEF2 family. In terms of assembly, forms a complex with class II HDACs in undifferentiating cells. On myogenic differentiation, HDACs are released into the cytoplasm allowing MEF2s to interact with other proteins for activation. Interacts with EP300 in differentiating cells; the interaction acetylates MEF2C leading to increased DNA binding and activation. Interacts with HDAC7 and CARM1. Interacts with HDAC4 and HDAC9; the interaction with HDACs represses transcriptional activity. Interacts with LPIN1. Interacts with MYOCD. Interacts with AKAP13. Interacts with FOXK1; the interaction inhibits MEF2C transactivation activity. Interacts (via N-terminus) with HABP4; this interaction decreases DNA-binding activity of MEF2C in myocardial cells in response to mechanical stress. Interacts with JPH2; interaction specifically takes place with the Junctophilin-2 N-terminal fragment cleavage product of JPH2. Interacts (via MADS box) with SOX18. Interacts with PHF7; the interaction promotes MEF2C binding to its transcription targets. Phosphorylation on Ser-59 enhances DNA binding activity. Phosphorylation on Ser-396 is required for Lys-391 sumoylation and inhibits transcriptional activity. In terms of processing, acetylated by p300 on several sites in diffentiating myocytes. Acetylation on Lys-4 increases DNA binding and transactivation. Post-translationally, sumoylated on Lys-391 with SUMO2 but not by SUMO1 represses transcriptional activity. Proteolytically cleaved in cerebellar granule neurons, probably by caspase 7, following neurotoxicity. Preferentially cleaves the CDK5-mediated hyperphosphorylated form which leads to neuron apoptosis and transcriptional inactivation. In terms of tissue distribution, expressed in brain and skeletal muscle.

The protein resides in the nucleus. The protein localises to the cytoplasm. It is found in the sarcoplasm. Transcription activator which binds specifically to the MEF2 element present in the regulatory regions of many muscle-specific genes. Controls cardiac morphogenesis and myogenesis, and is also involved in vascular development. Enhances transcriptional activation mediated by SOX18. Plays an essential role in hippocampal-dependent learning and memory by suppressing the number of excitatory synapses and thus regulating basal and evoked synaptic transmission. Crucial for normal neuronal development, distribution, and electrical activity in the neocortex. Necessary for proper development of megakaryocytes and platelets and for bone marrow B-lymphopoiesis. Required for B-cell survival and proliferation in response to BCR stimulation, efficient IgG1 antibody responses to T-cell-dependent antigens and for normal induction of germinal center B-cells. May also be involved in neurogenesis and in the development of cortical architecture. Isoforms that lack the repressor domain are more active than isoform 1. This Homo sapiens (Human) protein is Myocyte-specific enhancer factor 2C.